Reading from the N-terminus, the 72-residue chain is Large ribosomal subunit protein bL28 (72 aa).

It belongs to the bacterial ribosomal protein bL28 family.

The sequence is that of Large ribosomal subunit protein bL28 from Chlorobium phaeobacteroides (strain BS1).